The following is a 210-amino-acid chain: Large ribosomal subunit protein uL3 (210 aa).

Residues Thr136–Gly156 form a disordered region.

Belongs to the universal ribosomal protein uL3 family. As to quaternary structure, part of the 50S ribosomal subunit. Forms a cluster with proteins L14 and L19.

In terms of biological role, one of the primary rRNA binding proteins, it binds directly near the 3'-end of the 23S rRNA, where it nucleates assembly of the 50S subunit. The sequence is that of Large ribosomal subunit protein uL3 from Solidesulfovibrio magneticus (strain ATCC 700980 / DSM 13731 / RS-1) (Desulfovibrio magneticus).